A 177-amino-acid polypeptide reads, in one-letter code: Isopentenyl-diphosphate Delta-isomerase (177 aa).

Residues histidine 22 and histidine 28 each contribute to the Mn(2+) site. The 135-residue stretch at 26-160 folds into the Nudix hydrolase domain; the sequence is LRHKAISVFV…PERFTPWLRI (135 aa). Cysteine 62 is an active-site residue. Mn(2+) is bound at residue histidine 64. Glutamate 82 is a binding site for Mg(2+). Mn(2+) is bound by residues glutamate 108 and glutamate 110. Residue glutamate 110 is part of the active site.

It belongs to the IPP isomerase type 1 family. Requires Mg(2+) as cofactor. Mn(2+) is required as a cofactor.

The protein resides in the cytoplasm. It carries out the reaction isopentenyl diphosphate = dimethylallyl diphosphate. It participates in isoprenoid biosynthesis; dimethylallyl diphosphate biosynthesis; dimethylallyl diphosphate from isopentenyl diphosphate: step 1/1. The protein operates within porphyrin-containing compound metabolism; chlorophyll biosynthesis. Its function is as follows. Catalyzes the 1,3-allylic rearrangement of the homoallylic substrate isopentenyl (IPP) to its highly electrophilic allylic isomer, dimethylallyl diphosphate (DMAPP). This is Isopentenyl-diphosphate Delta-isomerase from Cereibacter sphaeroides (strain ATCC 17025 / ATH 2.4.3) (Rhodobacter sphaeroides).